Consider the following 163-residue polypeptide: NADH-quinone oxidoreductase subunit I (163 aa).

2 4Fe-4S ferredoxin-type domains span residues 53 to 83 (LRRYPNGEERCIACKLCEAICPAQAITIEAG) and 94 to 123 (VRYDIDMVKCIYCGFCQEACPVEAIVEGPN). [4Fe-4S] cluster contacts are provided by Cys63, Cys66, Cys69, Cys73, Cys103, Cys106, Cys109, and Cys113.

It belongs to the complex I 23 kDa subunit family. NDH-1 is composed of 14 different subunits. Subunits NuoA, H, J, K, L, M, N constitute the membrane sector of the complex. [4Fe-4S] cluster serves as cofactor.

It localises to the cell inner membrane. The catalysed reaction is a quinone + NADH + 5 H(+)(in) = a quinol + NAD(+) + 4 H(+)(out). In terms of biological role, NDH-1 shuttles electrons from NADH, via FMN and iron-sulfur (Fe-S) centers, to quinones in the respiratory chain. The immediate electron acceptor for the enzyme in this species is believed to be ubiquinone. Couples the redox reaction to proton translocation (for every two electrons transferred, four hydrogen ions are translocated across the cytoplasmic membrane), and thus conserves the redox energy in a proton gradient. In Bartonella bacilliformis (strain ATCC 35685 / KC583 / Herrer 020/F12,63), this protein is NADH-quinone oxidoreductase subunit I.